Reading from the N-terminus, the 553-residue chain is Mucolipin-3 (553 aa).

Topologically, residues 1–62 are cytoplasmic; sequence MANPEVLVSS…FWARGRKPWK (62 aa). Positions 52 to 62 are interaction with phosphoinositides; the sequence is KFWARGRKPWK. Residues 63–83 traverse the membrane as a helical segment; the sequence is LAIQILKIAMVTIQLVLFGLS. At 84–283 the chain is on the extracellular side; the sequence is NQMVVAFKEE…VSGSIQKNTH (200 aa). An extracellular/lumenal pore loop region spans residues 104-118; sequence KGYMDRMDDTYAVYT. The N-linked (GlcNAc...) asparagine glycan is linked to Asn138. A disulfide bond links Cys159 and Cys185. The N-linked (GlcNAc...) asparagine glycan is linked to Asn205. The cysteines at positions 238 and 269 are disulfide-linked. A helical transmembrane segment spans residues 284–304; the sequence is YMMIFDAFVILTCLASLVLCA. The Cytoplasmic portion of the chain corresponds to 305–341; sequence RSVIRGLQLQQEFVNFFLLHYKKEVSASDQMEFINGW. Residues 342–362 form a helical membrane-spanning segment; it reads YIMIIISDILTIVGSVLKMEI. The Extracellular portion of the chain corresponds to 363-371; that stretch reads QAKSLTSYD. Residues 372-392 form a helical membrane-spanning segment; the sequence is VCSILLGTSTMLVWLGVIRYL. Residues 393–414 lie on the Cytoplasmic side of the membrane; the sequence is GFFAKYNLLILTLQAALPNVMR. The chain crosses the membrane as a helical span at residues 415–435; that stretch reads FCCCAAMIYLGYCFCGWIVLG. The Extracellular portion of the chain corresponds to 436 to 443; sequence PYHEKFRS. An intramembrane region (pore-forming) is located at residues 444-464; that stretch reads LNRVSECLFSLINGDDMFSTF. The short motif at 456 to 459 is the Selectivity filter element; sequence NGDD. Residues 465-475 lie on the Extracellular side of the membrane; that stretch reads AKMQQKSYLVW. Residues 476–497 form a helical membrane-spanning segment; that stretch reads LFSRVYLYSFISLFIYMILSLF. Topologically, residues 498–553 are cytoplasmic; the sequence is IALITDTYETIKHYQQDGFPETELRKFIAECKDLPNSGKYRLEDDPPGSLLCCCKK.

This sequence belongs to the transient receptor (TC 1.A.4) family. Polycystin subfamily. MCOLN3 sub-subfamily. Homotetramer. Can heterooligomerize with MCOLN1; heteromeric assemblies have different channel properties as compared to the respective homooligomers and may be tissue-specific. May heterooligomerize with TRPV5 to form a functional distinct ion channel. Interacts with GABARAPL2. In terms of processing, N-glycosylated. Expressed in the cochlea; particularly in the inner and outer hair cells (at protein level).

The protein localises to the early endosome membrane. It localises to the late endosome membrane. The protein resides in the cytoplasmic vesicle. It is found in the autophagosome membrane. Its subcellular location is the cell projection. The protein localises to the stereocilium membrane. It catalyses the reaction Ca(2+)(in) = Ca(2+)(out). The catalysed reaction is Mg(2+)(in) = Mg(2+)(out). It carries out the reaction K(+)(in) = K(+)(out). The enzyme catalyses Na(+)(in) = Na(+)(out). With respect to regulation, channel activity is activated by PtdIns(3,5)P2 (phosphatidylinositol 3,5-bisphosphate). Inhibited by lumenal H(+) and Na(+). The channel pore shows dynamic behavior and undergoes spontaneous, Ca(2+)-dependent modulation when conducting Ca(2+). Its function is as follows. Nonselective cation channel probably playing a role in the regulation of membrane trafficking events. Acts as a Ca(2+)-permeable cation channel with inwardly rectifying activity. Mediates release of Ca(2+) from endosomes to the cytoplasm, contributes to endosomal acidification and is involved in the regulation of membrane trafficking and fusion in the endosomal pathway. Also permeable to Mg(2+), Na(+) and K(+). Does not seem to act as mechanosensory transduction channel in inner ear sensory hair cells. Proposed to play a critical role at the cochlear stereocilia ankle-link region during hair-bundle growth. Involved in the regulation of autophagy. Through association with GABARAPL2 may be involved in autophagosome formation possibly providing Ca(2+) for the fusion process. Through a possible and probably tissue-specific heteromerization with MCOLN1 may be at least in part involved in many lysosome-dependent cellular events. Possible heteromeric ion channel assemblies with TRPV5 show pharmacological similarity with TRPML3. This is Mucolipin-3 (Mcoln3) from Mus musculus (Mouse).